Consider the following 496-residue polypeptide: ATP-dependent protease ATPase subunit HslU2 (496 aa).

The N-terminal 10 residues, 1 to 10 (MIRFSWVRLC), are a transit peptide targeting the mitochondrion. ATP-binding positions include valine 51 and 94 to 99 (GVGKTE). Positions 177–191 (GSFGSSTRNSGSGDS) are enriched in low complexity. Residues 177 to 204 (GSFGSSTRNSGSGDSSAEEDKNSSSRDN) form a disordered region. Residues aspartate 308, glutamate 374, and arginine 446 each contribute to the ATP site.

The protein belongs to the ClpX chaperone family. HslU subfamily. In terms of assembly, a double ring-shaped homohexamer of HslV is capped on each side by a ring-shaped HslU homohexamer. The assembly of the HslU/HslV complex (HslVU) is dependent on binding of ATP.

Its subcellular location is the mitochondrion matrix. It is found in the kinetoplast. ATPase subunit of a proteasome-like degradation complex; this subunit has chaperone activity. The binding of ATP and its subsequent hydrolysis by HslU are essential for unfolding of protein substrates subsequently hydrolyzed by HslV. HslU recognizes the N-terminal part of its protein substrates and unfolds these before they are guided to HslV for hydrolysis. The HslVU protease complex functions in mitochondrial DNA replication by regulating DNA helicase PIF2 protein levels. The protein is ATP-dependent protease ATPase subunit HslU2 (HslU2) of Trypanosoma brucei brucei (strain 927/4 GUTat10.1).